Here is an 84-residue protein sequence, read N- to C-terminus: Small ribosomal subunit protein uS17 (84 aa).

It belongs to the universal ribosomal protein uS17 family. In terms of assembly, part of the 30S ribosomal subunit.

Its function is as follows. One of the primary rRNA binding proteins, it binds specifically to the 5'-end of 16S ribosomal RNA. This chain is Small ribosomal subunit protein uS17, found in Borrelia hermsii (strain HS1 / DAH).